Here is a 424-residue protein sequence, read N- to C-terminus: Appressorium protein ROW1 (424 aa).

An N-terminal signal peptide occupies residues 1 to 21 (MTKLTLTVALVSALLASGASA). Disordered stretches follow at residues 19 to 54 (ASAQ…WQPK), 69 to 90 (ANRI…GYNT), 278 to 304 (SGST…CSSV), and 327 to 398 (SSSA…TQGA). Residues 22–403 (QQPTGTGNGP…NTQGAASSAS (382 aa)) are Extracellular-facing. Residues 37–54 (TDLNRNQPTKSWTQWQPK) are compositionally biased toward polar residues. Composition is skewed to low complexity over residues 295-304 (APSSSQCSSV) and 327-347 (SSSA…SASS). The span at 362-382 (SGTGSGSGSGSGSGSGSGSGS) shows a compositional bias: gly residues. Residues 383–398 (SSGSSSSGSSSNTQGA) are compositionally biased toward low complexity. Residues 404–424 (SLTISVGLAGLVAIGAAAFAL) form a helical membrane-spanning segment.

It localises to the cell membrane. It is found in the secreted. Functionally, plays a role in the formation of the appressorium, a specialized infection structure with the purpose of penetrating the host surface, and is required for proper remodeling of the appressorium wall and vesicle secretion. The polypeptide is Appressorium protein ROW1 (Mycosarcoma maydis (Corn smut fungus)).